The chain runs to 308 residues: Protein translocase subunit SecF (308 aa).

The next 6 helical transmembrane spans lie at 28–48 (SIIL…NFGI), 140–160 (IEAG…YIWV), 164–184 (WYFG…ALGF), 194–214 (LSTI…SVVI), 246–266 (ILTV…GGEA), and 272–292 (ILVF…SAPI).

It belongs to the SecD/SecF family. SecF subfamily. As to quaternary structure, forms a complex with SecD. Part of the essential Sec protein translocation apparatus which comprises SecA, SecYEG and auxiliary proteins SecDF-YajC and YidC.

Its subcellular location is the cell inner membrane. Its function is as follows. Part of the Sec protein translocase complex. Interacts with the SecYEG preprotein conducting channel. SecDF uses the proton motive force (PMF) to complete protein translocation after the ATP-dependent function of SecA. This chain is Protein translocase subunit SecF, found in Rickettsia rickettsii (strain Sheila Smith).